The chain runs to 508 residues: Photosystem II CP47 reaction center protein (508 aa).

6 consecutive transmembrane segments (helical) span residues Ser21–Ser36, Ile101–Trp115, Gly140–Phe156, Ile203–Ser218, Val237–Val252, and Ser457–Arg472.

It belongs to the PsbB/PsbC family. PsbB subfamily. In terms of assembly, PSII is composed of 1 copy each of membrane proteins PsbA, PsbB, PsbC, PsbD, PsbE, PsbF, PsbH, PsbI, PsbJ, PsbK, PsbL, PsbM, PsbT, PsbX, PsbY, PsbZ, Psb30/Ycf12, at least 3 peripheral proteins of the oxygen-evolving complex and a large number of cofactors. It forms dimeric complexes. Binds multiple chlorophylls. PSII binds additional chlorophylls, carotenoids and specific lipids. is required as a cofactor.

It localises to the plastid. Its subcellular location is the chloroplast thylakoid membrane. Functionally, one of the components of the core complex of photosystem II (PSII). It binds chlorophyll and helps catalyze the primary light-induced photochemical processes of PSII. PSII is a light-driven water:plastoquinone oxidoreductase, using light energy to abstract electrons from H(2)O, generating O(2) and a proton gradient subsequently used for ATP formation. This chain is Photosystem II CP47 reaction center protein, found in Vitis vinifera (Grape).